A 458-amino-acid chain; its full sequence is Flavonol 3-O-glucosyltransferase F3GT2 (458 aa).

Histidine 20 acts as the Proton acceptor in catalysis. Histidine 20 serves as a coordination point for an anthocyanidin. Aspartate 119 acts as the Charge relay in catalysis. Threonine 141 contacts UDP-alpha-D-glucose. Histidine 150 is a binding site for an anthocyanidin. UDP-alpha-D-glucose is bound by residues alanine 333, glutamine 335, histidine 350, tryptophan 353, asparagine 354, serine 355, and glutamate 358. An an anthocyanidin-binding site is contributed by glycine 373. UDP-alpha-D-glucose contacts are provided by aspartate 374 and glutamine 375.

This sequence belongs to the UDP-glycosyltransferase family. Expressed in ovaries.

It carries out the reaction a flavonol + UDP-alpha-D-glucose = a flavonol 3-O-beta-D-glucoside + UDP + H(+). The protein operates within flavonoid metabolism. Functionally, catalyzes the glucosylation of quercetin. Preferentially uses UDP-glucose as sugar donor, but is also able to use UDP-gal and UDP-xyl. Is probably not required for the accumulation of anthocyanin in red-fleshed kiwifruit varieties. The polypeptide is Flavonol 3-O-glucosyltransferase F3GT2 (Actinidia chinensis var. chinensis (Chinese soft-hair kiwi)).